The chain runs to 292 residues: MSYIPFPDISPEIFSVELFGATFALRWYALAYIAGLLIGWRLVLRMIRSDRLWTFGAPMTEDQLERLLTWVILGVILGGRLGFVLFYQPSHYLAHPLDALKVWEGGMSFHGGFLGVMVAVIAFCLRERISILPVADLLAAATPPGLFLGRIANFINAELWGRPTTLPWGVAFPGEAAQTCPGIEGICARHPSQLYEAALEGIVLFAILAILIWRRGWLRWPGAVTGAFLAGYGCARFLVEFVRQPDAQFVTPGNPLGLAWEIGGYGLTMGQILSLPMILLGLYFMLRARRTA.

4 consecutive transmembrane segments (helical) span residues 18–38 (LFGA…GLLI), 67–87 (LLTW…VLFY), 105–125 (GGMS…AFCL), and 129–149 (ISIL…LFLG). Arginine 150 is a binding site for a 1,2-diacyl-sn-glycero-3-phospho-(1'-sn-glycerol). The next 3 helical transmembrane spans lie at 193–213 (QLYE…ILIW), 222–242 (GAVT…VEFV), and 266–286 (GLTM…YFML).

The protein belongs to the Lgt family.

The protein localises to the cell inner membrane. The catalysed reaction is L-cysteinyl-[prolipoprotein] + a 1,2-diacyl-sn-glycero-3-phospho-(1'-sn-glycerol) = an S-1,2-diacyl-sn-glyceryl-L-cysteinyl-[prolipoprotein] + sn-glycerol 1-phosphate + H(+). Its pathway is protein modification; lipoprotein biosynthesis (diacylglyceryl transfer). Functionally, catalyzes the transfer of the diacylglyceryl group from phosphatidylglycerol to the sulfhydryl group of the N-terminal cysteine of a prolipoprotein, the first step in the formation of mature lipoproteins. The chain is Phosphatidylglycerol--prolipoprotein diacylglyceryl transferase from Cereibacter sphaeroides (strain ATCC 17025 / ATH 2.4.3) (Rhodobacter sphaeroides).